A 224-amino-acid chain; its full sequence is Ribonuclease 3 (224 aa).

The 123-residue stretch at 5–127 (LERLCRRLNY…ILAAIYLDGG (123 aa)) folds into the RNase III domain. Glu40 is a Mg(2+) binding site. Residue Asp44 is part of the active site. Residues Asp113 and Glu116 each contribute to the Mg(2+) site. The active site involves Glu116. In terms of domain architecture, DRBM spans 154 to 224 (DAKTQLQEFL…AKAMLEQLQG (71 aa)).

Belongs to the ribonuclease III family. Homodimer. Mg(2+) serves as cofactor.

It is found in the cytoplasm. It catalyses the reaction Endonucleolytic cleavage to 5'-phosphomonoester.. In terms of biological role, digests double-stranded RNA. Involved in the processing of primary rRNA transcript to yield the immediate precursors to the large and small rRNAs (23S and 16S). Processes some mRNAs, and tRNAs when they are encoded in the rRNA operon. Processes pre-crRNA and tracrRNA of type II CRISPR loci if present in the organism. In Legionella pneumophila subsp. pneumophila (strain Philadelphia 1 / ATCC 33152 / DSM 7513), this protein is Ribonuclease 3.